The sequence spans 80 residues: HssA/B-like protein 2 (80 aa).

The segment at 1–29 is disordered; the sequence is MSLLSALTSISKPMNTSSKSSVSSKNVSG. Low complexity predominate over residues 9–29; it reads SISKPMNTSSKSSVSSKNVSG.

Belongs to the hssA/B family.

The sequence is that of HssA/B-like protein 2 (hssl2) from Dictyostelium discoideum (Social amoeba).